The sequence spans 271 residues: MSYLQDDKPVTLFEIGKMRAEGRKISMLTCYDASFASLLERAGVDILLVGDSLGNVVQGQKSTLPVTLEHMIYHTECVVRGSTRPFIVTDMPFGAYHESPSQAMHNAASLLAAGAQMVKLEGGTFMAETVRFLVERGIPVCAHIGLTPQSVHQLGGYRVQGRSEAAAAQLKGDALALEQAGAALMVMEMVPAALAREVTASLASMATIGIGAGPDCDGQVLVLHDMIGVYPGKKARFVRNFMTGKTDIDEAVASYVQAVRDGSFPAAEHCY.

Mg(2+) is bound by residues Asp51 and Asp90. 3-methyl-2-oxobutanoate is bound by residues 51 to 52 (DS), Asp90, and Lys119. Residue Glu121 coordinates Mg(2+). The Proton acceptor role is filled by Glu188.

This sequence belongs to the PanB family. Homodecamer; pentamer of dimers. Mg(2+) serves as cofactor.

The protein localises to the cytoplasm. The enzyme catalyses 3-methyl-2-oxobutanoate + (6R)-5,10-methylene-5,6,7,8-tetrahydrofolate + H2O = 2-dehydropantoate + (6S)-5,6,7,8-tetrahydrofolate. The protein operates within cofactor biosynthesis; (R)-pantothenate biosynthesis; (R)-pantoate from 3-methyl-2-oxobutanoate: step 1/2. In terms of biological role, catalyzes the reversible reaction in which hydroxymethyl group from 5,10-methylenetetrahydrofolate is transferred onto alpha-ketoisovalerate to form ketopantoate. This chain is 3-methyl-2-oxobutanoate hydroxymethyltransferase, found in Aromatoleum aromaticum (strain DSM 19018 / LMG 30748 / EbN1) (Azoarcus sp. (strain EbN1)).